We begin with the raw amino-acid sequence, 100 residues long: Small ribosomal subunit protein uS14 (100 aa).

This sequence belongs to the universal ribosomal protein uS14 family. In terms of assembly, part of the 30S ribosomal subunit. Contacts proteins S3 and S10.

Its function is as follows. Binds 16S rRNA, required for the assembly of 30S particles and may also be responsible for determining the conformation of the 16S rRNA at the A site. The protein is Small ribosomal subunit protein uS14 of Prochlorococcus marinus (strain AS9601).